Reading from the N-terminus, the 427-residue chain is Serine protease HTRA2, mitochondrial (427 aa).

A disordered region spans residues His-33–Asn-55. Residues Ser-66–Glu-86 traverse the membrane as a helical segment. Residues Ala-78 to Ser-81 carry the IAP-binding motif. Residues Ser-144–Leu-307 are serine protease. Catalysis depends on charge relay system residues His-162, Asp-194, and Ser-271. Residues Met-330–Val-415 form the PDZ domain.

This sequence belongs to the peptidase S1C family. As to quaternary structure, interacts with th/DIAP1 (via BIR 2 domain).

Its subcellular location is the mitochondrion intermembrane space. The protein localises to the mitochondrion membrane. The enzyme catalyses Cleavage of non-polar aliphatic amino-acids at the P1 position, with a preference for Val, Ile and Met. At the P2 and P3 positions, Arg is selected most strongly with a secondary preference for other hydrophilic residues.. In terms of biological role, serine protease that shows proteolytic activity against a non-specific substrate beta-casein. Promotes or induces cell death either by direct binding to and inhibition of BIRC proteins (also called inhibitor of apoptosis proteins, IAPs), leading to an increase in caspase activity, or by a BIRC inhibition-independent, caspase-independent and serine protease activity-dependent mechanism. Can antagonize antiapoptotic activity of th/Diap1 by directly inducing the degradation of th/Diap1. The protein is Serine protease HTRA2, mitochondrial of Drosophila pseudoobscura pseudoobscura (Fruit fly).